Reading from the N-terminus, the 1291-residue chain is GRB10-interacting GYF protein 2 (1291 aa).

The residue at position 2 (Ala-2) is an N-acetylalanine. A phosphoserine mark is found at Ser-19, Ser-26, and Ser-30. Residues Arg-107, Arg-119, and Arg-121 each carry the omega-N-methylarginine modification. Residues 112–132 are disordered; the sequence is GTVVGAPRGRSSSRGRGRGRG. Residue Ser-140 is modified to Phosphoserine. 3 disordered regions span residues 148–196, 209–248, and 267–484; these read FGRG…RKHE, REEQ…GWRE, and RGYR…TEPD. Omega-N-methylarginine is present on Arg-150. Residues 152 to 183 are compositionally biased toward basic and acidic residues; sequence GGREMHRSQSWEERGDRRFEKPGRKDVGRPNF. Phosphoserine occurs at positions 161, 190, and 237. The segment covering 226–248 has biased composition (basic and acidic residues); that stretch reads SRRDGERWRPHSPDGPRSTGWRE. A DDX6 binding motif motif is present at residues 281 to 311; it reads DDRDSLPEWCLEDAEEEMGTFDSSGAFLSLK. The span at 290-299 shows a compositional bias: acidic residues; sequence CLEDAEEEMG. Residues 313-364 are compositionally biased toward basic and acidic residues; the sequence is VQKEPIPEEQEMDFRPVEEGEERSDSDSSHNEEAKEPDKTNRREGEKTDRAG. The segment covering 371 to 393 has biased composition (polar residues); sequence VPQTSLSSARPGTPSDHQPQEAT. Position 383 is a phosphothreonine (Thr-383). The segment covering 394 to 415 has biased composition (basic and acidic residues); sequence QFERKDEPKAEQVEKAEEENRS. Positions 534-582 constitute a GYF domain; the sequence is MQKWYYKDPQGEIQGPFNNQEMAEWFQAGYFTMSLLVKRACDESFQPLG. Positions 548 to 564 are required for GRB10-binding; sequence GPFNNQEMAEWFQAGYF. Ser-594 carries the phosphoserine modification. 5 disordered regions span residues 732 to 794, 846 to 937, 958 to 998, 1011 to 1053, and 1090 to 1118; these read KAKA…QEEA, EEAA…SNTA, ERQL…SKPA, EARQ…SVWG, and KEVG…NRQN. Basic and acidic residues predominate over residues 846–898; sequence EEAAKWAREEEEAQRRLEENRLRMEEEAARLRHEEEERKRKELELQRQKDLMR. The span at 899 to 924 shows a compositional bias: low complexity; the sequence is QRQQQQEALRRLQQQQQQQQLAQMKL. Residues 925–937 show a composition bias toward polar residues; sequence PSSSTWGQQSNTA. Over residues 958-973 the composition is skewed to basic and acidic residues; sequence ERQLREEQRRQQRELM. Positions 977–986 are enriched in low complexity; the sequence is QQQQQQQQQQ. At Ser-995 the chain carries Phosphoserine. The segment covering 1015 to 1031 has biased composition (low complexity); that stretch reads MQKQQQQQQQQQQQHQQ. A compositionally biased stretch (polar residues) spans 1032–1053; that stretch reads SNRARNSTHSNLHTSLGNSVWG. Low complexity predominate over residues 1096 to 1110; the sequence is NSTNKNKNNASLSKS. Residue Lys-1129 forms a Glycyl lysine isopeptide (Lys-Gly) (interchain with G-Cter in SUMO2) linkage. Disordered stretches follow at residues 1202–1223 and 1239–1263; these read AKQK…QDSV and QSNN…KMVR. The segment covering 1208-1220 has biased composition (low complexity); sequence QQRQQQQQQQQQQ. Ser-1276 is subject to Phosphoserine.

This sequence belongs to the GIGYF family. As to quaternary structure, component of the 4EHP-GYF2 complex, at least composed of EIF4E2, GIGYF2 and ZNF598. Interacts (via the 4EHP-binding motif) with EIF4E2; the interaction is direct. Interacts with ZFP36/TTP (via P-P-P-P-G repeats); the interaction is direct. Interacts with GRB10. Interacts (via DDX6 motif) with DDX6 (via RecA-like domain 2). Expressed in heart, liver, kidney and brain as well as in testis.

Functionally, key component of the 4EHP-GYF2 complex, a multiprotein complex that acts as a repressor of translation initiation. In the 4EHP-GYF2 complex, acts as a factor that bridges EIF4E2 to ZFP36/TTP, linking translation repression with mRNA decay. Also recruits and bridges the association of the 4EHP complex with the decapping effector protein DDX6, which is required for the ZFP36/TTP-mediated down-regulation of AU-rich mRNA. May act cooperatively with GRB10 to regulate tyrosine kinase receptor signaling, including IGF1 and insulin receptors. In association with EIF4E2, assists ribosome-associated quality control (RQC) by sequestering the mRNA cap, blocking ribosome initiation and decreasing the translational load on problematic messages. Part of a pathway that works in parallel to RQC-mediated degradation of the stalled nascent polypeptide. GIGYF2 and EIF4E2 work downstream and independently of ZNF598, which seems to work as a scaffold that can recruit them to faulty mRNA even if alternative recruitment mechanisms may exist. In Mus musculus (Mouse), this protein is GRB10-interacting GYF protein 2.